The primary structure comprises 357 residues: MNRKIRASDRKIIPPQCEMPKMTYSKIQNILPGLGLSVAITAAAMVLEKIEEHYAGRAWLEALVIAILLGTAVRSLARPGPRFNKGINFSAKLLLEIAVVLLGASISASAVIEAGSGLIFGIAAVVAVAITLSYGIGRLLKLPHRMAVLVACGNSICGNSAIAAMAPVIGAESEDVAASIAFTAILGVIVVLTLPLLVPLLGLSFTQYGILAGLTVYAVPQVLAATAPVSLLSVQLGTLVKLVRVLMLGPVILVFALISGNKNADVKPGFFQLVPWFIIGFLAMMALHSLHLIPEAILPAIQYASMLLTIISMAALGLGVDIRSVASAGGRVTLTAILSLIALCCISLGLIHMLGVA.

11 helical membrane-spanning segments follow: residues 29–48 (NILP…MVLE), 58–77 (AWLE…RSLA), 90–112 (SAKL…SAVI), 117–136 (GLIF…SYGI), 149–171 (LVAC…VIGA), 181–203 (AFTA…LLGL), 210–232 (ILAG…VSLL), 242–261 (LVRV…ISGN), 268–290 (PGFF…LHSL), 300–322 (AIQY…GVDI), and 334–356 (LTAI…MLGV).

It belongs to the UPF0324 family.

Its subcellular location is the cell membrane. This chain is UPF0324 membrane protein BMEI1914, found in Brucella melitensis biotype 1 (strain ATCC 23456 / CCUG 17765 / NCTC 10094 / 16M).